The chain runs to 958 residues: MTQTLSQLENQGEFIRRHIGSSAEQQKEMLATVGASSLNDLTQKIVPRDIALPEPPDVGGGATEQQALAELKAIASQNKRYQSYIGMGYAPAVLPPVILRNLLENPGWYTAYTPYQPEVSQGRLESLLNFQQVTIDLTGLDIASASLLDEATAAAEAMAMAKRISKLKNADRFFVADDIHPQTLDVVRTRAETFGFDVIVDKAEKVLELDGVFGVLLQQVGTTGEVHDYADLIAQLKQRKIIVSVAADLMALLLLTAPGKQGADMVFGSAQRFGVPMGYGGPHAAFFASRDEFKRSMPGRIIGVSRDAAGNTALRMAMQTREQHIRREKANSNICTAQVLLANIAAMYAVYHGSKGLKRIAGRIHRLTDILAVGLQKAGFTLRYKTWFDTLTVEVADKAAVLARAEKAEINLRTDTYGAVGITLSEATRRDDVIKLFSVLTGTDDKLDVEALDKELMTESHSIPASMLRSDEILLHPNFNRYHSETDMMRYMHRLERRDLALNQAMIPLGSCTMKLNAAAEMLPISWPEFNELHPFCPPEQAQGYQQMISQLSHWLVQLTGYDVVCMQPNSGAQGEYAGLLAIRRYHESRGEGHRHICLIPSSAHGTNPASAHMAGMTVVVVSCDKEGNIDLVDLREKAEESGNELSCIMVTYPSTHGVYEETIRQVCEIIHQYGGQVYLDGANMNAQVGITAPGFIGADVSHLNLHKTFCIPHGGGGPGMGPIGVKAHLAPFLPGHSVVQMDGLTEQRAVSAAPFGSASILPISWMYIRMMGSQGLKQASQTAILNANYIAARLKNDYDVLYTGHNGYVAHECILDIRPLKEEFGISEMDIAKRLIDYGFHAPTMSFPVAGTLMVEPTESESKVEIDRFVDAMLAIRAEIGKVAKGEWSLEDNPLVNAPHVQAELVSDWSHSYSRETAVFPTLETKANKYWPAVKRLDDVYGDRNLHCSCAPVSDYQ.

Lys708 is modified (N6-(pyridoxal phosphate)lysine).

It belongs to the GcvP family. In terms of assembly, the glycine cleavage system is composed of four proteins: P, T, L and H. Requires pyridoxal 5'-phosphate as cofactor.

The enzyme catalyses N(6)-[(R)-lipoyl]-L-lysyl-[glycine-cleavage complex H protein] + glycine + H(+) = N(6)-[(R)-S(8)-aminomethyldihydrolipoyl]-L-lysyl-[glycine-cleavage complex H protein] + CO2. Functionally, the glycine cleavage system catalyzes the degradation of glycine. The P protein binds the alpha-amino group of glycine through its pyridoxal phosphate cofactor; CO(2) is released and the remaining methylamine moiety is then transferred to the lipoamide cofactor of the H protein. The chain is Glycine dehydrogenase (decarboxylating) from Photorhabdus laumondii subsp. laumondii (strain DSM 15139 / CIP 105565 / TT01) (Photorhabdus luminescens subsp. laumondii).